The following is a 636-amino-acid chain: 1-deoxy-D-xylulose-5-phosphate synthase (636 aa).

Residues H72 and 113 to 115 (GHA) each bind thiamine diphosphate. D144 is a binding site for Mg(2+). Residues 145 to 146 (GS), N174, Y287, and E370 each bind thiamine diphosphate. N174 serves as a coordination point for Mg(2+).

Belongs to the transketolase family. DXPS subfamily. In terms of assembly, homodimer. Mg(2+) serves as cofactor. It depends on thiamine diphosphate as a cofactor.

It catalyses the reaction D-glyceraldehyde 3-phosphate + pyruvate + H(+) = 1-deoxy-D-xylulose 5-phosphate + CO2. It functions in the pathway metabolic intermediate biosynthesis; 1-deoxy-D-xylulose 5-phosphate biosynthesis; 1-deoxy-D-xylulose 5-phosphate from D-glyceraldehyde 3-phosphate and pyruvate: step 1/1. Its function is as follows. Catalyzes the acyloin condensation reaction between C atoms 2 and 3 of pyruvate and glyceraldehyde 3-phosphate to yield 1-deoxy-D-xylulose-5-phosphate (DXP). The chain is 1-deoxy-D-xylulose-5-phosphate synthase from Synechococcus sp. (strain ATCC 27144 / PCC 6301 / SAUG 1402/1) (Anacystis nidulans).